The chain runs to 1896 residues: von Willebrand factor A domain-containing protein 8 (1896 aa).

Residues Met1–Arg18 constitute a mitochondrion transit peptide. Residue Gly439–Ser446 coordinates ATP. Residues Gly1536–Thr1564 are disordered. In terms of domain architecture, VWFA spans Arg1705–Ile1887.

Monomer.

Its subcellular location is the mitochondrion. Functionally, exhibits ATPase activity in vitro. The protein is von Willebrand factor A domain-containing protein 8 (vwa8) of Danio rerio (Zebrafish).